The following is a 1330-amino-acid chain: MDLKILSLATDKTTDKLQEFLQTLKDDDLASLLQNQAVKGRAVGTLLRAVLKGSPCSEEDGALRRYKIYSCCIQLVESGDLQQDVASEIIGLLMLEVHHFPGPLLVDLASDFVGAVREDRLVNGKSLELLPIILTALATKKEVLACGKGDLNGEEYKRQLIDTLCSVRWPQRYMIQLTSVFKDVCLTPEEMNLVVAKVLTMFSKLNLQEIPPLVYQLLVLSSKGSRRSVLDGIIAFFRELDKQHREEQSSDELSELITAPADELYHVEGTVILHIVFAIKLDCELGRELLKHLKAGQQGDPSKCLCPFSIALLLSLTRIQRFEEQVFDLLKTSVVKSFKDLQLLQGSKFLQTLVPQRTCVSTMILEVVRNSVHSWDHVTQGLIEFGFILMDSYGPKKILDGKAVEIGTSLSKMTNQHACKLGANILLETFKIHEMIRQEILEQVLNRVVTRTSSPINHFLDLFSDIIMYAPLILQNCSKVTETFDYLTFLPLQTVQGLLKAVQPLLKISMSMRDSLILVLRKAMFASQLDARKSAVAGFLLLLKNFKVLGSLPSSQCTQSIGVTQVRVDVHSRYSAVANETFCLEIIDSLKRSLGQQADIRLMLYDGFYDVLRRNSQLASSIMQTLFSQLKQFYEPEPDLLPPLKLGACVLTQGSQIFLQEPLDHLLSCIQHCLAWYKSRVVPLQQGDEGEEEEEELYSELDDMLESITVRMIKSELEDFELDKSADFSQNTNVGIKNNICACLIMGVCEVLMEYNFSISNFSKSKFEEILSLFTCYKKFSDILSEKAGKGKAKMTSKVSDSLLSLKFVSDLLTALFRDSIQSHEESLSVLRSSGEFMHYAVNVTLQKIQQLIRTGHVSGPDGQNPDKIFQNLCDITRVLLWRYTSIPTSVEESGKKEKGKSISLLCLEGLQKTFSVVLQFYQPKVQQFLQALDVMGTEEEEAGVTVTQRASFQIRQFQRSLLNLLSSEEDDFNSKEALLLIAVLSTLSRLLEPTSPQFVQMLSWTSKICKEYSQEDASFCKSLMNLFFSLHVLYKSPVTLLRDLSQDIHGQLGDIDQDVEIEKTDHFAVVNLRTAAPTVCLLVLSQAEKVLEEVDWLIAKIKGSANQETLSDKVTPEDASSQAVPPTLLIEKAIVMQLGTLVTFFHELVQTALPSGSCVDTLLKGLSKIYSTLTAFVKYYLQVCQSSRGIPNTVEKLVKLSGSHLTPVCYSFISYVQNKSSDAPKCSEKEKAAVSTTMAKVLRETKPIPNLVFAIEQYEKFLIQLSKKSKVNLMQHMKLSTSRDFKIKGSVLDMVLREDEEDENEEGTASAHTQQDREPAKKRRKKCLS.

Lys522 is covalently cross-linked (Glycyl lysine isopeptide (Lys-Gly) (interchain with G-Cter in ubiquitin)). Ser555 carries the post-translational modification Phosphoserine. Thr558 is subject to Phosphothreonine. Residue Ser729 is modified to Phosphoserine. Position 948 is a phosphothreonine (Thr948). A Phosphoserine modification is found at Ser1122. The disordered stretch occupies residues Glu1299 to Ser1330. Basic residues predominate over residues Ala1321–Ser1330.

This sequence belongs to the Fanconi anemia group I protein family. In terms of assembly, homodimer. Part of a FANCI-FANCD2 heterodimeric complex that binds and scans dsDNA for DNA damage. Interacts with FANCL. Interacts with MTMR15/FAN1. Interacts with POLN. Interacts with UBL5; the interaction promotes FANCI homodimerization. Monoubiquitinated by FANCL on Lys-522 during S phase and upon genotoxic stress. Deubiquitinated by USP1 as cells enter G2/M, or once DNA repair is completed. Monoubiquitination requires the FANCA-FANCB-FANCC-FANCE-FANCF-FANCG-FANCM complex. Ubiquitination is required for binding to chromatin, DNA repair, and normal cell cycle progression. Monoubiquitination is stimulated by DNA-binding. In terms of processing, phosphorylated in response to DNA damage by ATM and/or ATR. Phosphorylation of FANCI promotes ubiquitination of FANCD2, which prevents DNA release from the FANCI-FANCD2 complex.

The protein resides in the nucleus. Its subcellular location is the cytoplasm. Its function is as follows. Plays an essential role in the repair of DNA double-strand breaks by homologous recombination and in the repair of interstrand DNA cross-links (ICLs) by promoting FANCD2 monoubiquitination by FANCL and participating in recruitment to DNA repair sites. The FANCI-FANCD2 complex binds and scans double-stranded DNA (dsDNA) for DNA damage; this complex stalls at DNA junctions between double-stranded DNA and single-stranded DNA. Participates in S phase and G2 phase checkpoint activation upon DNA damage. This is Fanconi anemia group I protein homolog (Fanci) from Mus musculus (Mouse).